The chain runs to 341 residues: Ferrochelatase (341 aa).

Residues His-196 and Glu-277 each contribute to the Fe cation site.

The protein belongs to the ferrochelatase family.

The protein localises to the cytoplasm. It catalyses the reaction heme b + 2 H(+) = protoporphyrin IX + Fe(2+). The protein operates within porphyrin-containing compound metabolism; protoheme biosynthesis; protoheme from protoporphyrin-IX: step 1/1. Catalyzes the ferrous insertion into protoporphyrin IX. This is Ferrochelatase from Synechococcus sp. (strain JA-3-3Ab) (Cyanobacteria bacterium Yellowstone A-Prime).